A 232-amino-acid chain; its full sequence is Myb-related protein 308 (232 aa).

HTH myb-type domains lie at 9–61 and 62–116; these read KAHT…INYL and RPDL…RRKL. 2 DNA-binding regions (H-T-H motif) span residues 37–61 and 89–112; these read WRSL…INYL and WSLI…NTHI.

In terms of tissue distribution, expressed in roots, stems, leaves, seed pods and flowers.

It is found in the nucleus. In terms of biological role, transcription factor. The polypeptide is Myb-related protein 308 (Antirrhinum majus (Garden snapdragon)).